The primary structure comprises 61 residues: Large ribosomal subunit protein bL28 (61 aa).

It belongs to the bacterial ribosomal protein bL28 family.

This is Large ribosomal subunit protein bL28 from Lactobacillus gasseri (strain ATCC 33323 / DSM 20243 / BCRC 14619 / CIP 102991 / JCM 1131 / KCTC 3163 / NCIMB 11718 / NCTC 13722 / AM63).